The primary structure comprises 469 residues: ATP-dependent protease ATPase subunit HslU (469 aa).

ATP contacts are provided by residues Ile24 and 66–71; that span reads GVGKTE. The disordered stretch occupies residues 159–179; it reads LFGSMNQPDEPAEEEVDQELK. The ATP site is built by Asp282, Glu347, and Arg419.

It belongs to the ClpX chaperone family. HslU subfamily. A double ring-shaped homohexamer of HslV is capped on each side by a ring-shaped HslU homohexamer. The assembly of the HslU/HslV complex is dependent on binding of ATP.

The protein localises to the cytoplasm. Functionally, ATPase subunit of a proteasome-like degradation complex; this subunit has chaperone activity. The binding of ATP and its subsequent hydrolysis by HslU are essential for unfolding of protein substrates subsequently hydrolyzed by HslV. HslU recognizes the N-terminal part of its protein substrates and unfolds these before they are guided to HslV for hydrolysis. This is ATP-dependent protease ATPase subunit HslU from Listeria innocua serovar 6a (strain ATCC BAA-680 / CLIP 11262).